The chain runs to 66 residues: Large ribosomal subunit protein bL35 (66 aa).

Positions 1–26 (MPKMKTHRGAAKRVKRTGSGKLKRSR) are enriched in basic residues. Residues 1-49 (MPKMKTHRGAAKRVKRTGSGKLKRSRAFTSHLFANKSTKQKRKLRKASL) form a disordered region.

The protein belongs to the bacterial ribosomal protein bL35 family.

The protein is Large ribosomal subunit protein bL35 of Staphylococcus saprophyticus subsp. saprophyticus (strain ATCC 15305 / DSM 20229 / NCIMB 8711 / NCTC 7292 / S-41).